Here is a 195-residue protein sequence, read N- to C-terminus: 3-isopropylmalate dehydratase small subunit (195 aa).

This sequence belongs to the LeuD family. LeuD type 1 subfamily. As to quaternary structure, heterodimer of LeuC and LeuD.

The catalysed reaction is (2R,3S)-3-isopropylmalate = (2S)-2-isopropylmalate. The protein operates within amino-acid biosynthesis; L-leucine biosynthesis; L-leucine from 3-methyl-2-oxobutanoate: step 2/4. Its function is as follows. Catalyzes the isomerization between 2-isopropylmalate and 3-isopropylmalate, via the formation of 2-isopropylmaleate. The polypeptide is 3-isopropylmalate dehydratase small subunit (Salinispora arenicola (strain CNS-205)).